A 415-amino-acid chain; its full sequence is Runt-related transcription factor 3 (415 aa).

Disordered stretches follow at residues 1–48, 176–266, and 375–415; these read MRIP…GGRA, GPRE…FPDP, and NLMN…WRPY. The Runt domain occupies 54–182; sequence SMVDVLADHA…TVDGPREPRR (129 aa). The segment covering 186-205 has biased composition (basic and acidic residues); that stretch reads KLEDQTKPFPDRFGDLERLR. Lys192 is covalently cross-linked (Glycyl lysine isopeptide (Lys-Gly) (interchain with G-Cter in SUMO2)). The span at 209 to 240 shows a compositional bias: polar residues; it reads TPSTPSPRGSLSTTSHFSSQPQTPIQGTSELN. Phosphoserine is present on Ser243. Residues 393–402 are compositionally biased toward polar residues; that stretch reads SHSNSPTALS. Over residues 406–415 the composition is skewed to basic and acidic residues; it reads RMDEAVWRPY.

As to quaternary structure, heterodimer with CBFB. RUNX3 binds DNA as a monomer and through the Runt domain. DNA-binding is increased by heterodimerization. Interacts with TLE1 and SUV39H1. The tyrosine phosphorylated form (via runt domain) interacts with SRC (via protein kinase domain). Interacts with FYN and LCK. Interacts with FOXP3. Interacts with ZFHX3. Interacts with TBX21. In terms of processing, phosphorylated on tyrosine residues by SRC. Phosphorylated by LCK and FYN. As to expression, expressed in gastric cancer tissues (at protein level).

Its subcellular location is the nucleus. It is found in the cytoplasm. Functionally, forms the heterodimeric complex core-binding factor (CBF) with CBFB. RUNX members modulate the transcription of their target genes through recognizing the core consensus binding sequence 5'-TGTGGT-3', or very rarely, 5'-TGCGGT-3', within their regulatory regions via their runt domain, while CBFB is a non-DNA-binding regulatory subunit that allosterically enhances the sequence-specific DNA-binding capacity of RUNX. The heterodimers bind to the core site of a number of enhancers and promoters, including murine leukemia virus, polyomavirus enhancer, T-cell receptor enhancers, LCK, IL3 and GM-CSF promoters. May be involved in the control of cellular proliferation and/or differentiation. In association with ZFHX3, up-regulates CDKN1A promoter activity following TGF-beta stimulation. CBF complexes repress ZBTB7B transcription factor during cytotoxic (CD8+) T cell development. They bind to RUNX-binding sequence within the ZBTB7B locus acting as transcriptional silencer and allowing for cytotoxic T cell differentiation. CBF complexes binding to the transcriptional silencer is essential for recruitment of nuclear protein complexes that catalyze epigenetic modifications to establish epigenetic ZBTB7B silencing. Necessary for the development and survival of sensory neurons expressing parvalbumin. The chain is Runt-related transcription factor 3 (RUNX3) from Homo sapiens (Human).